The primary structure comprises 137 residues: Large ribosomal subunit protein uL16 (137 aa).

Belongs to the universal ribosomal protein uL16 family. As to quaternary structure, part of the 50S ribosomal subunit.

Binds 23S rRNA and is also seen to make contacts with the A and possibly P site tRNAs. This chain is Large ribosomal subunit protein uL16, found in Stutzerimonas stutzeri (strain A1501) (Pseudomonas stutzeri).